A 335-amino-acid polypeptide reads, in one-letter code: Glycerol-3-phosphate dehydrogenase [NAD(P)+] (335 aa).

Ser12, Trp13, His33, Arg34, and Lys108 together coordinate NADPH. Residues Lys108, Gly137, and Thr139 each contribute to the sn-glycerol 3-phosphate site. An NADPH-binding site is contributed by Ala141. Sn-glycerol 3-phosphate contacts are provided by Lys192, Asp245, Ser255, Arg256, and Asn257. Catalysis depends on Lys192, which acts as the Proton acceptor. Arg256 is an NADPH binding site. Glu282 provides a ligand contact to NADPH.

Belongs to the NAD-dependent glycerol-3-phosphate dehydrogenase family.

Its subcellular location is the cytoplasm. The catalysed reaction is sn-glycerol 3-phosphate + NAD(+) = dihydroxyacetone phosphate + NADH + H(+). It carries out the reaction sn-glycerol 3-phosphate + NADP(+) = dihydroxyacetone phosphate + NADPH + H(+). It functions in the pathway membrane lipid metabolism; glycerophospholipid metabolism. Functionally, catalyzes the reduction of the glycolytic intermediate dihydroxyacetone phosphate (DHAP) to sn-glycerol 3-phosphate (G3P), the key precursor for phospholipid synthesis. The polypeptide is Glycerol-3-phosphate dehydrogenase [NAD(P)+] (Methylococcus capsulatus (strain ATCC 33009 / NCIMB 11132 / Bath)).